The following is a 659-amino-acid chain: ATP-binding cassette sub-family D member 3 (659 aa).

The segment at 1-61 (MAAFSKYLTA…GKKERAVVDK (61 aa)) is interaction with PEX19. Asparagine 12 carries an N-linked (GlcNAc...) asparagine glycan. Lysine 61 is subject to N6-acetyllysine. Residues 84 to 104 (GYLVLIAVMLVSRTYCDVWMI) form a helical membrane-spanning segment. Positions 85–372 (YLVLIAVMLV…MLLRMSQALG (288 aa)) constitute an ABC transmembrane type-1 domain. Asparagine 106 carries an N-linked (GlcNAc...) asparagine glycan. The helical transmembrane segment at 126-146 (LLNFIAAMPLISLVNNFLKYG) threads the bilayer. N-linked (GlcNAc...) asparagine glycosylation is present at asparagine 206. The helical transmembrane segment at 224–244 (AIGAQGPASMMAYLVVSGLFL) threads the bilayer. N6-acetyllysine is present on lysine 260. The chain crosses the membrane as a helical span at residues 313 to 333 (MGFIDSIIAKYLATVVGYLVV). Position 399 is an N6-acetyllysine (lysine 399). An ABC transporter domain is found at 440–659 (IKFDHVPLAT…ITEDTVEFGS (220 aa)). Position 473-480 (473-480 (GPNGCGKS)) interacts with ATP. Position 533 is an N6-acetyllysine (lysine 533). Serine 659 bears the Phosphoserine mark.

The protein belongs to the ABC transporter superfamily. ABCD family. Peroxisomal fatty acyl CoA transporter (TC 3.A.1.203) subfamily. Homodimers. Can form heterodimers with ABCD1 and ABCD2. Dimerization is necessary to form an active transporter. Interacts with PEX19; mediates the targeting of ABCD3 to peroxisomes. Post-translationally, ubiquitinated by PEX2 during pexophagy in response to starvation, leading to its degradation.

It is found in the peroxisome membrane. The catalysed reaction is a very long-chain fatty acyl-CoA + H2O = a very long-chain fatty acid + CoA + H(+). It carries out the reaction a very long-chain fatty acid(in) + ATP + H2O = a very long-chain fatty acid(out) + ADP + phosphate + H(+). The enzyme catalyses a long-chain fatty acyl-CoA + H2O = a long-chain fatty acid + CoA + H(+). It catalyses the reaction a long-chain fatty acid(in) + ATP + H2O = a long-chain fatty acid(out) + ADP + phosphate + H(+). The catalysed reaction is pristanoyl-CoA + H2O = 2,6,10,14-tetramethylpentadecanoate + CoA + H(+). It carries out the reaction 2,6,10,14-tetramethylpentadecanoate(in) + ATP + H2O = 2,6,10,14-tetramethylpentadecanoate(out) + ADP + phosphate + H(+). The enzyme catalyses hexadecanedioyl-CoA + H2O = hexadecanedioate + CoA + H(+). It catalyses the reaction hexadecanedioate(in) + ATP + H2O = hexadecanedioate(out) + ADP + phosphate + H(+). The catalysed reaction is (5Z,8Z,11Z,14Z,17Z)-eicosapentaenoyl-CoA + H2O = (5Z,8Z,11Z,14Z,17Z)-eicosapentaenoate + CoA + H(+). It carries out the reaction (5Z,8Z,11Z,14Z,17Z)-eicosapentaenoate(in) + ATP + H2O = (5Z,8Z,11Z,14Z,17Z)-eicosapentaenoate(out) + ADP + phosphate + H(+). The enzyme catalyses (4Z,7Z,10Z,13Z,16Z,19Z)-docosahexaenoyl-CoA + H2O = (4Z,7Z,10Z,13Z,16Z,19Z)-docosahexaenoate + CoA + H(+). It catalyses the reaction (4Z,7Z,10Z,13Z,16Z,19Z)-docosahexaenoate(in) + ATP + H2O = (4Z,7Z,10Z,13Z,16Z,19Z)-docosahexaenoate(out) + ADP + phosphate + H(+). Broad substrate specificity ATP-dependent transporter of the ATP-binding cassette (ABC) family that catalyzes the transport of long-chain fatty acids (LCFA)-CoA, dicarboxylic acids-CoA, long-branched-chain fatty acids-CoA and bile acids from the cytosol to the peroxisome lumen for beta-oxydation. Has fatty acyl-CoA thioesterase and ATPase activities. Probably hydrolyzes fatty acyl-CoAs into free fatty acids prior to their ATP-dependent transport into peroxisomes. Thus, play a role in regulation of LCFAs and energy metabolism namely, in the degradation and biosynthesis of fatty acids by beta-oxidation. The protein is ATP-binding cassette sub-family D member 3 of Homo sapiens (Human).